A 389-amino-acid polypeptide reads, in one-letter code: Chalcone synthase 1A (389 aa).

C164 is an active-site residue.

It belongs to the thiolase-like superfamily. Chalcone/stilbene synthases family.

It carries out the reaction (E)-4-coumaroyl-CoA + 3 malonyl-CoA + 3 H(+) = 2',4,4',6'-tetrahydroxychalcone + 3 CO2 + 4 CoA. It functions in the pathway secondary metabolite biosynthesis; flavonoid biosynthesis. Functionally, the primary product of this enzyme is 4,2',4',6'-tetrahydroxychalcone (also termed naringenin-chalcone or chalcone) which can under specific conditions spontaneously isomerize into naringenin. This chain is Chalcone synthase 1A (CHS-1A), found in Pisum sativum (Garden pea).